Here is a 118-residue protein sequence, read N- to C-terminus: Ribonuclease P protein component (118 aa).

This sequence belongs to the RnpA family. In terms of assembly, consists of a catalytic RNA component (M1 or rnpB) and a protein subunit.

It carries out the reaction Endonucleolytic cleavage of RNA, removing 5'-extranucleotides from tRNA precursor.. Its function is as follows. RNaseP catalyzes the removal of the 5'-leader sequence from pre-tRNA to produce the mature 5'-terminus. It can also cleave other RNA substrates such as 4.5S RNA. The protein component plays an auxiliary but essential role in vivo by binding to the 5'-leader sequence and broadening the substrate specificity of the ribozyme. This Rickettsia canadensis (strain McKiel) protein is Ribonuclease P protein component.